A 183-amino-acid polypeptide reads, in one-letter code: Hypoxanthine-guanine-xanthine phosphoribosyltransferase (183 aa).

GMP contacts are provided by residues 102–110, K134, and D163; that span reads EDIIDTGLT. Residue D106 is the Proton acceptor of the active site. D163 provides a ligand contact to Mg(2+).

As to quaternary structure, homodimer. Mg(2+) is required as a cofactor.

Its subcellular location is the cytoplasm. It catalyses the reaction IMP + diphosphate = hypoxanthine + 5-phospho-alpha-D-ribose 1-diphosphate. The enzyme catalyses GMP + diphosphate = guanine + 5-phospho-alpha-D-ribose 1-diphosphate. The catalysed reaction is XMP + diphosphate = xanthine + 5-phospho-alpha-D-ribose 1-diphosphate. Its pathway is purine metabolism; GMP biosynthesis via salvage pathway; GMP from guanine: step 1/1. It participates in purine metabolism; IMP biosynthesis via salvage pathway; IMP from hypoxanthine: step 1/1. The protein operates within purine metabolism; XMP biosynthesis via salvage pathway; XMP from xanthine: step 1/1. Its function is as follows. Essential in nucleic acid metabolism of T.foetus because the parasite is unable to synthesize purine nucleotides de novo and relies on the HGXPRTase activities for its purine requirements by salvaging purine bases from the host. Works with guanine, hypoxanthine and xanthine. The chain is Hypoxanthine-guanine-xanthine phosphoribosyltransferase (HPT) from Tritrichomonas foetus (Trichomonas foetus).